A 1033-amino-acid chain; its full sequence is Ubiquitin carboxyl-terminal hydrolase 48 (1033 aa).

The region spanning 89–419 (VGLTNLGATC…NAYMLVYRLQ (331 aa)) is the USP domain. Residue C98 is the Nucleophile of the active site. Catalysis depends on H351, which acts as the Proton acceptor. DUSP domains follow at residues 457–552 (QSVA…KALC), 567–690 (NQLN…NKEC), and 710–823 (MMAS…RTRA). Residues 610 to 639 (EQDEDAEHSNGKLNGNAPNKDEVNEEKREE) are disordered. Residues 878–920 (APELNVSSSEAEEEREENKPEGEQDPDFNQSNGGAKRQKLSHQ) are disordered. The 77-residue stretch at 931-1007 (RRSTRHRKVR…ILLKADEPIA (77 aa)) folds into the Ubiquitin-like domain.

The protein belongs to the peptidase C19 family.

The protein resides in the cytoplasm. It localises to the nucleus. The catalysed reaction is Thiol-dependent hydrolysis of ester, thioester, amide, peptide and isopeptide bonds formed by the C-terminal Gly of ubiquitin (a 76-residue protein attached to proteins as an intracellular targeting signal).. Functionally, recognizes and hydrolyzes the peptide bond at the C-terminal Gly of ubiquitin. Involved in the processing of poly-ubiquitin precursors as well as that of ubiquitinated proteins. The protein is Ubiquitin carboxyl-terminal hydrolase 48 (USP48) of Gallus gallus (Chicken).